Here is a 490-residue protein sequence, read N- to C-terminus: Transcriptional activator/repressor MOT3 (490 aa).

At methionine 1 the chain carries N-acetylmethionine. 3 disordered regions span residues 1 to 69, 101 to 162, and 214 to 267; these read MNAD…NKDD, NNNN…HPNQ, and NNGN…PQHH. The segment covering 8-36 has biased composition (low complexity); sequence QQQQQQRQQHQQQQHQQQQHQHQHQQQQH. A compositionally biased stretch (polar residues) spans 37 to 65; that stretch reads TILQNVSNTNNIGSDSLASQPFNTTTVSS. The segment at 98 to 295 is prion domain (PrD); that stretch reads NNSNNNNVTA…NLNLNINPAQ (198 aa). 4 stretches are compositionally biased toward low complexity: residues 119–128, 138–157, 214–232, and 248–264; these read NNSNNSNNSN, NNST…NNNN, NNGN…HSAP, and THNN…NNAP. 2 consecutive C2H2-type zinc fingers follow at residues 346-368 and 374-397; these read HQCQ…LLSH and FLCP…KLKH. Positions 421-436 are enriched in low complexity; that stretch reads NNNNDNNNNNNSNSAS. The disordered stretch occupies residues 421–458; sequence NNNNDNNNNNNSNSASGSGGAGAAAAAATAPENEDGNG.

The protein localises to the nucleus. Transcription factor that affects the expression of a large set of genes. Recognizes and binds to the consensus sequence 5'-[CAT]AGG[TC]A-3' in the promoter region. Plays a major role in the repression of a specific subset of hypoxic genes (e.g. ANB1, DAN1 and HEM13) under aerobic conditions. Acts synergistically with the transcription factor ROX1 to recruit the general repression complex SSN6-TUP1 to the promoter of hypoxic genes. Represses transcription of ergosterol biosynthetic genes. Negatively regulates pheromone-induced gene expression. Can act as a transcriptional activator (e.g. of genes like CYC1, SUC2 and the Ty long terminal repeat delta promoter). This is Transcriptional activator/repressor MOT3 (MOT3) from Saccharomyces cerevisiae (strain ATCC 204508 / S288c) (Baker's yeast).